A 159-amino-acid chain; its full sequence is Abscisic acid and environmental stress-inducible protein (159 aa).

A run of 6 repeats spans residues 38–49 (GGGYNHGGGGYN), 50–61 (GGGYNHGGGGYN), 63–74 (GGGYNHGGGGYN), 77–88 (GGGYNHGGGGYN), 91–102 (GGGYNHGGGGYN), and 105–116 (GGGYNHGGGGYN). A 7 X 12 AA repeats of G-G-G-Y-N-H-G-G-G-Y-N region spans residues 38-135 (GGGYNHGGGG…GYNHGGGGCQ (98 aa)). Residues 124–135 (GGGYNHGGGGCQ) form a 7; approximate repeat.

This sequence belongs to the GRP family.

The sequence is that of Abscisic acid and environmental stress-inducible protein from Medicago sativa subsp. falcata (Sickle medic).